A 204-amino-acid chain; its full sequence is Demethylsterigmatocystin 6-O-methyltransferase stcP (204 aa).

S-adenosyl-L-methionine-binding positions include 48-49 (GG), Asp-73, 93-94 (DF), and Arg-109. The active-site Proton acceptor is the His-113.

This sequence belongs to the class I-like SAM-binding methyltransferase superfamily. Cation-independent O-methyltransferase family.

The enzyme catalyses 6-demethylsterigmatocystin + S-adenosyl-L-methionine = sterigmatocystin + S-adenosyl-L-homocysteine + H(+). Its pathway is mycotoxin biosynthesis; sterigmatocystin biosynthesis. Functionally, norsolorinic acid reductase; part of the gene cluster that mediates the biosynthesis of sterigmatocystin (ST), a polyketide-derived furanocoumarin which is part of the most toxic and carcinogenic compounds among the known mycotoxins. The first step in the biosynthesis of sterigmatocystin is the production of hexanoate by the fatty acid synthase (FAS) units stcJ and stcK. The polyketide backbone is assembled by the non-reducing polyketide synthase stcA by condensation of the starter hexanoyl-CoA and 7 malonyl-CoA extender units followed by cyclization and release of norsolorinic acid. Norsolorinic acid is the first stable intermediate in the biosynthesis of sterigmatocystin and is converted into averantin (AVN) by the ketoreductase stcE which reduces the hexanoate ketone to an alcohol. Averantin is then oxidized into 5'-hydroxyaverantin (HAVN) by the cytochrome P450 monooxygenase stcF. 5'-hydroxyaverantin is further converted to 5'-oxyaverantin (OAVN) by the 5'-hydroxyaverantin dehydrogenase stcG. The next step is the conversion of OAVN into averufin (AVF) which is catalyzed by a yet to be identified enzyme. The cytochrome P450 monooxygenase stcB and the flavin-binding monooxygenase stcW are both required for the conversion of averufin to 1-hydroxyversicolorone. The esterase stcI probably catalyzes the formation of versiconal hemiacetal acetate from 1-hydroxyversicolorone. The oxydoreductase stcN then probably catalyzes the biosynthetic step from versiconal to versicolorin B (VERB). The next step is performed by the versicolorin B desaturase stcL to produce versicolorin A (VERA). The ketoreductase stcU and the cytochrome P450 monooxygenase stcS are involved in the conversion of versicolorin A to demethylsterigmatocystin. The Baeyer-Villiger oxidas stcQ and the reductase stcR might be involved in the biosynthetic step from versicolorin A to demethylsterigmatocystin. The final step in the biosynthesis of sterigmatocystin is the methylation of demethylsterigmatocystin catalyzed by the methyltransferase stcP. The polypeptide is Demethylsterigmatocystin 6-O-methyltransferase stcP (Emericella nidulans (strain FGSC A4 / ATCC 38163 / CBS 112.46 / NRRL 194 / M139) (Aspergillus nidulans)).